The chain runs to 28 residues: Seed allergenic protein 1 (28 aa).

The tract at residues 1-28 is disordered; it reads VTXEEGXYSISDQSKVGEQXIRSPDREM.

The sequence is that of Seed allergenic protein 1 from Prunus dulcis (Almond).